A 421-amino-acid chain; its full sequence is Ig-like V-type domain-containing protein FAM187A (421 aa).

A signal peptide spans 1–18 (MNLAHTTVLLWAWGSLQA). Over 19–377 (FEIVEKENIF…VSFSDPETRA (359 aa)) the chain is Extracellular. The Ig-like V-type domain occupies 268 to 362 (PWLPQVPIQF…IAGFRLGVTS (95 aa)). Cys-290 and Cys-346 form a disulfide bridge. Asn-318 carries an N-linked (GlcNAc...) asparagine glycan. Residues 378 to 398 (ALGLILIGYMLITVIFISIHL) traverse the membrane as a helical segment. Topologically, residues 399–421 (CRCCCYLFRFCPNFSPRLSRPQL) are cytoplasmic.

It belongs to the FAM187 family.

It localises to the membrane. In Bos taurus (Bovine), this protein is Ig-like V-type domain-containing protein FAM187A (FAM187A).